The following is a 370-amino-acid chain: Phosphate acyltransferase (370 aa).

This sequence belongs to the PlsX family. Homodimer. Probably interacts with PlsY.

It is found in the cytoplasm. The enzyme catalyses a fatty acyl-[ACP] + phosphate = an acyl phosphate + holo-[ACP]. It participates in lipid metabolism; phospholipid metabolism. Functionally, catalyzes the reversible formation of acyl-phosphate (acyl-PO(4)) from acyl-[acyl-carrier-protein] (acyl-ACP). This enzyme utilizes acyl-ACP as fatty acyl donor, but not acyl-CoA. The polypeptide is Phosphate acyltransferase (Polaromonas naphthalenivorans (strain CJ2)).